The primary structure comprises 178 residues: Ribosome maturation factor RimM (178 aa).

The region spanning 100–178 is the PRC barrel domain; sequence DEGEFYWHQL…EIRVDWDADF (79 aa).

This sequence belongs to the RimM family. Binds ribosomal protein uS19.

The protein localises to the cytoplasm. An accessory protein needed during the final step in the assembly of 30S ribosomal subunit, possibly for assembly of the head region. Essential for efficient processing of 16S rRNA. May be needed both before and after RbfA during the maturation of 16S rRNA. It has affinity for free ribosomal 30S subunits but not for 70S ribosomes. The sequence is that of Ribosome maturation factor RimM from Azotobacter vinelandii (strain DJ / ATCC BAA-1303).